The sequence spans 207 residues: ATP-dependent Clp protease proteolytic subunit (207 aa).

The propeptide occupies 1–14; it reads MSYSGERDNLAPHM. Serine 111 functions as the Nucleophile in the catalytic mechanism. Residue histidine 136 is part of the active site.

Belongs to the peptidase S14 family. As to quaternary structure, fourteen ClpP subunits assemble into 2 heptameric rings which stack back to back to give a disk-like structure with a central cavity, resembling the structure of eukaryotic proteasomes. Component of the ClpAP and ClpXP complexes.

It localises to the cytoplasm. The enzyme catalyses Hydrolysis of proteins to small peptides in the presence of ATP and magnesium. alpha-casein is the usual test substrate. In the absence of ATP, only oligopeptides shorter than five residues are hydrolyzed (such as succinyl-Leu-Tyr-|-NHMec, and Leu-Tyr-Leu-|-Tyr-Trp, in which cleavage of the -Tyr-|-Leu- and -Tyr-|-Trp bonds also occurs).. Its function is as follows. Cleaves peptides in various proteins in a process that requires ATP hydrolysis. Has a chymotrypsin-like activity. Plays a major role in the degradation of misfolded proteins. This is ATP-dependent Clp protease proteolytic subunit from Salmonella paratyphi A (strain ATCC 9150 / SARB42).